We begin with the raw amino-acid sequence, 58 residues long: Large ribosomal subunit protein bL32 (58 aa).

Disordered stretches follow at residues 1-22 (MAVP…HWKR) and 39-58 (LSGR…DDEE).

This sequence belongs to the bacterial ribosomal protein bL32 family.

This chain is Large ribosomal subunit protein bL32, found in Crocosphaera subtropica (strain ATCC 51142 / BH68) (Cyanothece sp. (strain ATCC 51142)).